The sequence spans 280 residues: Bicarbonate transport system permease protein CmpB (280 aa).

A run of 7 helical transmembrane segments spans residues 32–52 (PIFG…AGLI), 99–119 (YSLA…QPLL), 126–146 (IFQF…LVAL), 153–173 (AIFV…TEGV), 198–218 (ILIP…IGLA), 219–239 (WLAI…GFFI), and 251–271 (IILA…GIAY). An ABC transmembrane type-1 domain is found at 88-266 (TLASLGRVAQ…YIGAVGLLLD (179 aa)).

The protein belongs to the binding-protein-dependent transport system permease family. In terms of assembly, the complex is composed of two ATP-binding proteins (CmpC and CmpD), a transmembrane protein (CmpB) and a solute-binding protein (CmpA).

It is found in the cell inner membrane. In terms of biological role, part of the ABC transporter complex CmpABCD involved in bicarbonate transport. Probably responsible for the translocation of the substrate across the membrane. This Synechocystis sp. (strain ATCC 27184 / PCC 6803 / Kazusa) protein is Bicarbonate transport system permease protein CmpB (cmpB).